The following is a 342-amino-acid chain: D-erythrose-4-phosphate dehydrogenase (342 aa).

Residue 12-13 (RI) coordinates NAD(+). Substrate contacts are provided by residues 154–156 (SCT), Arg-200, 213–214 (TK), and Arg-236. The Nucleophile role is filled by Cys-155. Asn-318 is a binding site for NAD(+).

It belongs to the glyceraldehyde-3-phosphate dehydrogenase family. Epd subfamily. In terms of assembly, homotetramer.

The protein resides in the cytoplasm. It catalyses the reaction D-erythrose 4-phosphate + NAD(+) + H2O = 4-phospho-D-erythronate + NADH + 2 H(+). The protein operates within cofactor biosynthesis; pyridoxine 5'-phosphate biosynthesis; pyridoxine 5'-phosphate from D-erythrose 4-phosphate: step 1/5. Its function is as follows. Catalyzes the NAD-dependent conversion of D-erythrose 4-phosphate to 4-phosphoerythronate. The chain is D-erythrose-4-phosphate dehydrogenase from Salmonella arizonae (strain ATCC BAA-731 / CDC346-86 / RSK2980).